We begin with the raw amino-acid sequence, 212 residues long: Protein-L-isoaspartate O-methyltransferase (212 aa).

The active site involves serine 60.

Belongs to the methyltransferase superfamily. L-isoaspartyl/D-aspartyl protein methyltransferase family.

The protein localises to the cytoplasm. The catalysed reaction is [protein]-L-isoaspartate + S-adenosyl-L-methionine = [protein]-L-isoaspartate alpha-methyl ester + S-adenosyl-L-homocysteine. Functionally, catalyzes the methyl esterification of L-isoaspartyl residues in peptides and proteins that result from spontaneous decomposition of normal L-aspartyl and L-asparaginyl residues. It plays a role in the repair and/or degradation of damaged proteins. This is Protein-L-isoaspartate O-methyltransferase from Methanococcus maripaludis (strain C5 / ATCC BAA-1333).